An 856-amino-acid polypeptide reads, in one-letter code: Inactive rhomboid protein 2 (856 aa).

Positions 1–115 are disordered; the sequence is MASADKNGGS…PGFRRQASLS (115 aa). At 1–409 the chain is on the cytoplasmic side; the sequence is MASADKNGGS…HRPYFTYWLT (409 aa). S90 is modified (phosphoserine). The span at 94–106 shows a compositional bias: basic and acidic residues; that stretch reads PRSRWQESSEKRP. Residues S113 and S117 each carry the phosphoserine modification. Residues 165 to 184 are disordered; that stretch reads PSQEAPSFQGTESPKPCKMP. The segment at 191 to 271 is involved in interaction with FRMD8; sequence ARGRAFRHPE…GQRCRVVKRS (81 aa). 3 positions are modified to phosphoserine: S323, S325, and S328. The helical transmembrane segment at 410-430 threads the bilayer; sequence FVHVIITLLVICTYGIAPVGF. Over 431 to 660 the chain is Lumenal; that stretch reads AQHVTTQLVL…PDQFYRLWLS (230 aa). Residues 531–553 are disordered; that stretch reads GPPMDKSDLGQKRTSGAVCHQDP. The chain crosses the membrane as a helical span at residues 661-681; sequence LFLHAGVVHCLVSVVFQMTIL. Over 682–692 the chain is Cytoplasmic; that stretch reads RDLEKLAGWHR. A helical membrane pass occupies residues 693–713; sequence IAIIFILSGITGNLASAIFLP. Topologically, residues 714–715 are lumenal; that stretch reads YR. Residues 716–736 form a helical membrane-spanning segment; it reads AEVGPAGSQFGLLACLFVELF. The Cytoplasmic portion of the chain corresponds to 737 to 747; sequence QSWPLLERPWK. Residues 748–768 traverse the membrane as a helical segment; the sequence is AFLNLSAIVLFLFICGLLPWI. Residues 769 to 773 lie on the Lumenal side of the membrane; that stretch reads DNIAH. A helical transmembrane segment spans residues 774–794; the sequence is IFGFLSGLLLAFAFLPYITFG. Residues 795-802 are Cytoplasmic-facing; that stretch reads TSDKYRKR. Residues 803–823 form a helical membrane-spanning segment; that stretch reads ALILVSLLAFAGLFAALVLWL. Residues 824–856 are Lumenal-facing; it reads YIYPINWPWIEHLTCFPFTSRFCEKYELDQVLH.

It belongs to the peptidase S54 family. Interacts with EGF. Interacts (via cytoplasmic N-terminus) with FRMD8/iTAP; this interaction leads to mutual protein stabilization. Interacts with ADAM17/TACE. As to expression, found in the epidermis and esophageal epithelium.

It localises to the endoplasmic reticulum membrane. The protein resides in the cell membrane. In terms of biological role, regulates ADAM17 protease, a sheddase of the epidermal growth factor (EGF) receptor ligands and TNF, thereby plays a role in sleep, cell survival, proliferation, migration and inflammation. Does not exhibit any protease activity on its own. This is Inactive rhomboid protein 2 (RHBDF2) from Homo sapiens (Human).